Consider the following 209-residue polypeptide: COP9 signalosome complex subunit 8 (209 aa).

The 172-residue stretch at Asp-8–Phe-179 folds into the PCI domain. Ser-175 bears the Phosphoserine mark.

This sequence belongs to the CSN8 family. Component of the CSN complex, composed of COPS1/GPS1, COPS2, COPS3, COPS4, COPS5, COPS6, COPS7 (COPS7A or COPS7B), COPS8 and COPS9. In the complex, it probably interacts directly with COPS3, COPS4 and COPS7 (COPS7A or COPS7B).

It is found in the cytoplasm. Its subcellular location is the nucleus. Its function is as follows. Component of the COP9 signalosome complex (CSN), a complex involved in various cellular and developmental processes. The CSN complex is an essential regulator of the ubiquitin (Ubl) conjugation pathway by mediating the deneddylation of the cullin subunits of SCF-type E3 ligase complexes, leading to decrease the Ubl ligase activity of SCF-type complexes such as SCF, CSA or DDB2. The complex is also involved in phosphorylation of p53/TP53, c-jun/JUN, IkappaBalpha/NFKBIA, ITPK1 and IRF8/ICSBP, possibly via its association with CK2 and PKD kinases. CSN-dependent phosphorylation of TP53 and JUN promotes and protects degradation by the Ubl system, respectively. In Rattus norvegicus (Rat), this protein is COP9 signalosome complex subunit 8 (Cops8).